Here is a 47-residue protein sequence, read N- to C-terminus: Delta-actitoxin-Cgg1b (47 aa).

P3 is modified (hydroxyproline). Disulfide bonds link C4-C44, C6-C34, and C27-C45.

Belongs to the sea anemone sodium channel inhibitory toxin family. Type I subfamily.

Its subcellular location is the secreted. The protein resides in the nematocyst. Binds voltage-dependently at site 3 of sodium channels (Nav) and inhibits the inactivation, thereby blocking neuronal transmission. In Condylactis gigantea (Giant Caribbean anemone), this protein is Delta-actitoxin-Cgg1b.